Reading from the N-terminus, the 144-residue chain is Short-chain diamines transporter (144 aa).

4 helical membrane passes run 9–29 (IHAI…LSFI), 35–55 (EVTG…NMIF), 76–96 (ILHA…MIAY), and 103–123 (IDAF…TFIF).

The protein belongs to the proteobacterial antimicrobial compound efflux (PACE) (TC 2.A.117) family. Exists in a monomer-homodimer equilibrium. The dimer is probably the functional form of the protein, and the assembly of the dimer is mediated by binding of chlorhexidine and promoted by high pH conditions.

The protein resides in the cell inner membrane. Protonation/deprotonation of Glu-15 may play an important role in transporter function. Cadaverin transport is inhibited in the presence of CCCP. Its function is as follows. Mediates the efflux of short-chain diamines when energized by an electrochemical gradient. Recognizes specifically the short-chain diamines cadaverine and putrescine as substrates, and promotes the active transport of these substrates in exchange for a cation. Protons are probably the primary source of energy for transport, however it was not possible to conclude with complete certainty that protons, rather than alternative cations such as Na(+) ions, are exchanged for substrates by AceI. In addition, is involved in resistance to the synthetic biocide chlorhexidine, a widely used antiseptic and disinfectant in both hospital and community settings. Interacts directly with chlorhexidine and mediates its efflux via an energy-dependent mechanism. The chain is Short-chain diamines transporter from Acinetobacter baumannii (strain ATCC 17978 / DSM 105126 / CIP 53.77 / LMG 1025 / NCDC KC755 / 5377).